The primary structure comprises 117 residues: Con-Ins T3 (117 aa).

The signal sequence occupies residues 1-24; the sequence is MTTSFYFLLMALGLLLYVCQSSFG. Residues 25–29 constitute a propeptide that is removed on maturation; it reads NQHTR. At P34 the chain carries 4-hydroxyproline; partial. Disulfide bonds link C38-C101, C50-C114, and C100-C105. Positions 53–94 are cleaved as a propeptide — c peptide; it reads KRNDAGKKRGQASPLWQRGGSLSMLKARAKRNEAFHLQRAHR. At E98 the chain carries 4-carboxyglutamate. E109 carries the 4-carboxyglutamate; partial modification. C114 bears the Cysteine amide mark. Positions 116-117 are excised as a propeptide; it reads NS.

It belongs to the insulin family. As to quaternary structure, heterodimer of A and B chains; disulfide-linked. In terms of tissue distribution, expressed by the venom gland.

The protein resides in the secreted. This venom insulin facilitates prey capture by rapidly inducing hypoglycemic shock. It is one of the smallest known insulin found in nature and lacks the C-terminal segment of the B chain that, in human insulin, mediates engagement of the insulin receptor (INSR) and assembly of the hormone's hexameric storage form. Despite lacking this segment, it both binds and activates human insulin receptor (long isoform (HIR-B) OF INSR) with only a 10-fold lower potency. In vivo, intraperitoneal injection of this peptide into zebrafish lowers blood glucose with the same potency than human insulin. In addition, when applied to water, this peptide reduces overall locomotor activity of zebrafish larvae, observed as a significant decrease in the percentage of time spent swimming and movement frequency. In Conus tulipa (Fish-hunting cone snail), this protein is Con-Ins T3.